The primary structure comprises 110 residues: UPF0367 protein Syncc9605_2376 (110 aa).

It belongs to the UPF0367 family.

The protein is UPF0367 protein Syncc9605_2376 of Synechococcus sp. (strain CC9605).